The primary structure comprises 196 residues: Pyridoxal 5'-phosphate synthase subunit PdxT (196 aa).

Position 47-49 (G47–S49) interacts with L-glutamine. C79 (nucleophile) is an active-site residue. Residues R106 and I134 to R135 each bind L-glutamine. Catalysis depends on charge relay system residues H170 and E172.

This sequence belongs to the glutaminase PdxT/SNO family. In terms of assembly, in the presence of PdxS, forms a dodecamer of heterodimers. Only shows activity in the heterodimer.

The catalysed reaction is aldehydo-D-ribose 5-phosphate + D-glyceraldehyde 3-phosphate + L-glutamine = pyridoxal 5'-phosphate + L-glutamate + phosphate + 3 H2O + H(+). The enzyme catalyses L-glutamine + H2O = L-glutamate + NH4(+). It functions in the pathway cofactor biosynthesis; pyridoxal 5'-phosphate biosynthesis. Functionally, catalyzes the hydrolysis of glutamine to glutamate and ammonia as part of the biosynthesis of pyridoxal 5'-phosphate. The resulting ammonia molecule is channeled to the active site of PdxS. In Bacillus cytotoxicus (strain DSM 22905 / CIP 110041 / 391-98 / NVH 391-98), this protein is Pyridoxal 5'-phosphate synthase subunit PdxT.